A 326-amino-acid chain; its full sequence is Peptidoglycan-binding protein ArfA (326 aa).

Residues 1 to 21 (MASKAGLGQTPATTDARRTQK) form a disordered region. A required for protein translocation to the outer membrane region spans residues 1–73 (MASKAGLGQT…PTLTPTSTRG (73 aa)). Residues 30 to 50 (PWLIGAVVIPLLIAAIGYGAF) form a helical membrane-spanning segment. Residues 127 to 196 (DPVVRSLDFS…KIVNNIEVTG (70 aa)) form the BON domain. An intrachain disulfide couples C208 to C250. In terms of domain architecture, OmpA-like spans 212-326 (QSAINAVTGG…KNRRVEIVVN (115 aa)).

It belongs to the outer membrane OOP (TC 1.B.6) superfamily. ArfA family. Zn(2+) serves as cofactor.

The protein localises to the secreted. Its subcellular location is the cell wall. The protein resides in the cell outer membrane. In terms of biological role, probably plays a role in ammonia secretion that neutralizes the medium at pH 5.5, although it does not play a direct role in ammonia transport. In Mycobacterium tuberculosis (strain CDC 1551 / Oshkosh), this protein is Peptidoglycan-binding protein ArfA (arfA).